A 357-amino-acid polypeptide reads, in one-letter code: tRNA N6-adenosine threonylcarbamoyltransferase (357 aa).

Fe cation-binding residues include His-120 and His-124. Residues 143-147, Asp-176, Gly-189, and Asn-289 each bind substrate; that span reads LVSGG. Asp-317 provides a ligand contact to Fe cation.

This sequence belongs to the KAE1 / TsaD family. The cofactor is Fe(2+).

It localises to the cytoplasm. The enzyme catalyses L-threonylcarbamoyladenylate + adenosine(37) in tRNA = N(6)-L-threonylcarbamoyladenosine(37) in tRNA + AMP + H(+). Functionally, required for the formation of a threonylcarbamoyl group on adenosine at position 37 (t(6)A37) in tRNAs that read codons beginning with adenine. Is involved in the transfer of the threonylcarbamoyl moiety of threonylcarbamoyl-AMP (TC-AMP) to the N6 group of A37, together with TsaE and TsaB. TsaD likely plays a direct catalytic role in this reaction. The protein is tRNA N6-adenosine threonylcarbamoyltransferase of Polynucleobacter necessarius subsp. necessarius (strain STIR1).